The primary structure comprises 150 residues: Snaclec bothrojaracin subunit beta (150 aa).

The N-terminal stretch at 1 to 23 (MGRFIFVSFGLLVVFLSLSGTAA) is a signal peptide. Cystine bridges form between cysteine 25–cysteine 36, cysteine 53–cysteine 146, and cysteine 123–cysteine 138. Residues 32–147 (YEGSCYRVFE…CTKLEYFVCE (116 aa)) form the C-type lectin domain.

It belongs to the snaclec family. As to quaternary structure, heterodimer of subunits alpha and beta; disulfide-linked. As to expression, expressed by the venom gland.

It localises to the secreted. Functionally, this potent antithrombotic agent acts in a calcium-independent manner. Exerts its anticoagulant effect by two distinct mechanisms. It binds to activated thrombin through exosite 1, blocking fibrinogen clotting, platelet activation, factor V activation and other effects, and it interacts with prothrombin (F2), decreasing its proteolytic activation -especially in the presence of factor Va. In vivo, intravenous injection before thrombosis induction causes a significant decrease in thrombus weight. Furthermore, BJC shows a prolonged effect by remaining in the plasma bound to prothrombin for at least 12 hours. The chain is Snaclec bothrojaracin subunit beta from Bothrops jararaca (Jararaca).